The sequence spans 1338 residues: Nonribosomal peptide synthetase astA (1338 aa).

A disordered region spans residues 22–52 (IAVVSGDIPSPHPKNEPSQTSTLHIPRDSDL). Positions 271 to 681 (FQARCRQNPS…GRKGAEVKLR (411 aa)) are adenylation. The region spanning 820-893 (TPVEIIIHDA…SLAEKCSAGG (74 aa)) is the Carrier domain. Ser-854 is modified (O-(pantetheine 4'-phosphoryl)serine). The interval 949–1336 (TFIFRLSGPV…IIRFLDSPDS (388 aa)) is condensation.

The protein belongs to the NRP synthetase family.

It carries out the reaction 7beta,14,16-trihydroxyconfertifolin + benzoate + H(+) = dideacetyl astellolide A + H2O. The catalysed reaction is 7beta,14,16-trihydroxyconfertifolin + 4-hydroxybenzoate + H(+) = dideacetyl astellolide B + H2O. It functions in the pathway secondary metabolite biosynthesis; terpenoid biosynthesis. In terms of biological role, nonribosomal peptide synthetase; part of the gene cluster that mediates the biosynthesis of astellolides, drimane-type sesquiterpene esters that show antimicrobial, anti-inflammatory, and anti-tumor activities. The first step in astellolide biosynthesis is performed by the sesquiterpene cyclase astC that catalyzes the formation of drimanyl pyrophosphate from farnesyl pyrophosphate. Drimanyl pyrophosphate is then dephosphorylated by the sesquiterpene phosphatase astI to produce drimanyl monophosphate which is further dephosphorylated to drim-8-ene-11-ol by atsK. Drim-8-ene-11-ol is converted to confertifolin, probably by the cytochrome P450 monooxygenase astD and/or the dehydrogenase astE. The cytochrome P450 monooxygenases astB, astF and astJ then hydroxylate confertifolin at C6, C14, or C15 to form trihydroxy confertifolin. The nonribosomal peptide synthetase astA catalyzes ester bond formation between trihydroxy contifolin and benzoic acid (BA) or 4-hydroxy benzoic acid (4HBA), leading to the formation of dideacetyl astellolides A and B, respectively. Finally, the O-acetyltransferase astG converts dideacetyl astellolides A and B into deacetyl astellolides A and B. The polypeptide is Nonribosomal peptide synthetase astA (Aspergillus oryzae (strain ATCC 42149 / RIB 40) (Yellow koji mold)).